Reading from the N-terminus, the 367-residue chain is UDP-N-acetylglucosamine--N-acetylmuramyl-(pentapeptide) pyrophosphoryl-undecaprenol N-acetylglucosamine transferase (367 aa).

UDP-N-acetyl-alpha-D-glucosamine contacts are provided by residues 10 to 12 (TGG), asparagine 124, serine 196, and glutamine 300.

This sequence belongs to the glycosyltransferase 28 family. MurG subfamily.

Its subcellular location is the cell membrane. The catalysed reaction is di-trans,octa-cis-undecaprenyl diphospho-N-acetyl-alpha-D-muramoyl-L-alanyl-D-glutamyl-meso-2,6-diaminopimeloyl-D-alanyl-D-alanine + UDP-N-acetyl-alpha-D-glucosamine = di-trans,octa-cis-undecaprenyl diphospho-[N-acetyl-alpha-D-glucosaminyl-(1-&gt;4)]-N-acetyl-alpha-D-muramoyl-L-alanyl-D-glutamyl-meso-2,6-diaminopimeloyl-D-alanyl-D-alanine + UDP + H(+). It functions in the pathway cell wall biogenesis; peptidoglycan biosynthesis. Cell wall formation. Catalyzes the transfer of a GlcNAc subunit on undecaprenyl-pyrophosphoryl-MurNAc-pentapeptide (lipid intermediate I) to form undecaprenyl-pyrophosphoryl-MurNAc-(pentapeptide)GlcNAc (lipid intermediate II). This chain is UDP-N-acetylglucosamine--N-acetylmuramyl-(pentapeptide) pyrophosphoryl-undecaprenol N-acetylglucosamine transferase, found in Natranaerobius thermophilus (strain ATCC BAA-1301 / DSM 18059 / JW/NM-WN-LF).